We begin with the raw amino-acid sequence, 1067 residues long: Protein CLEC16A homolog (1067 aa).

The 150-residue stretch at 50–199 (LRCIAEILIW…AVRTISLNVY (150 aa)) folds into the FPL domain. Residues 333–353 (SIVALFLLSLVFLVVSHAPLV) traverse the membrane as a helical segment. Over residues 409–418 (SSSSYALSED) the composition is skewed to low complexity. 4 disordered regions span residues 409-434 (SSSSYALSEDSGVESSSPATTELDSQ), 837-861 (ASSSGGSGNSSGSSSRSSHHRPMFS), 876-993 (SNSA…SRSH), and 1037-1067 (QSSEETSFIGSDGNEATGGSEGRRRGAIETV). Over residues 421–432 (VESSSPATTELD) the composition is skewed to polar residues. Polar residues predominate over residues 876 to 888 (SNSAGVSRTQMAP). Residues 917 to 926 (RADHSDRERS) show a composition bias toward basic and acidic residues. Over residues 927–947 (PSVSMGSHSSSQSRENSQPRS) the composition is skewed to low complexity. The segment covering 951-974 (RSRESSPRMPRPRSEEIPLEDFQH) has biased composition (basic and acidic residues). Positions 975–993 (SRNNSPHSRGNPSPASRSH) are enriched in polar residues. Positions 1057 to 1067 (EGRRRGAIETV) are enriched in basic and acidic residues.

The protein belongs to the CLEC16A/gop-1 family. As to quaternary structure, interacts with the class C Vps-HOPS complex components; Car, Dor and Vps16a.

The protein resides in the cytoplasmic vesicle. The protein localises to the autophagosome membrane. It is found in the late endosome membrane. Its subcellular location is the golgi apparatus membrane. Its function is as follows. Required for mitophagy, autophagy and endosome maturation, possibly by acting in multiple membrane trafficking pathways. Required for endosome trafficking and maturation. Functions with the class C Vps-HOPS complex member Vps16a to promote endosomal maturation into degradative late endosomes and lysosomes. In response to starvation, functions at an early stage of autophagy to promote autophagosome growth and efficient autophagy. Essential for the recruitment of lva-positive Golgi elements to autophagosomes. Likely to function by promoting membrane traffic from the Golgi complex to the developing autophagosomes. Also regulates synaptic growth at the neuromuscular junctions (NMJ) by down-regulating BMP signaling. The chain is Protein CLEC16A homolog from Drosophila melanogaster (Fruit fly).